Consider the following 520-residue polypeptide: Cyclin-L2 (520 aa).

Residue Ala-2 is modified to N-acetylalanine. Cyclin-like stretches follow at residues 83 to 185 (ELIQ…RVLK) and 198 to 282 (KIIV…KILQ). The disordered stretch occupies residues 316 to 520 (LPGGTQVLDG…DHPGHSRHRR (205 aa)). Residues Ser-330, Ser-338, Ser-348, and Ser-351 each carry the phosphoserine modification. A compositionally biased stretch (basic and acidic residues) spans 357-367 (RRLEGAKKAKA). Residue Ser-369 is modified to Phosphoserine. Basic and acidic residues predominate over residues 376-390 (KGRESRSRSRSREQS). The segment at 385–423 (RSREQSYSRSPSRSASPKRRKSDSGSTSGGSKSQSRSRS) is RS. Over residues 408-436 (SGSTSGGSKSQSRSRSRSDSPPRQAPRSA) the composition is skewed to low complexity. Basic and acidic residues predominate over residues 441–454 (SEIRGSRKSKDCKY). The segment covering 456-471 (QKPHKSRSRSSSRSRS) has biased composition (basic residues). Basic and acidic residues-rich tracts occupy residues 472 to 481 (RSRERADNPG) and 489 to 514 (YYRD…DHPG).

This sequence belongs to the cyclin family. Cyclin L subfamily. As to quaternary structure, interacts with CDK11A, CDK11B, CDK12, CDK13 and POLR2A, the hyperphosphorylated C-terminal domain (CTD) of RNA polymerase II. May form a ternary complex with CDK11B and casein kinase II (CKII). Interacts with pre-mRNA-splicing factors, including at least SRSF1, SRSF2 AND SRSF7/SLU7. As to expression, widely expressed.

The protein resides in the nucleus speckle. It localises to the nucleus. Its subcellular location is the nucleoplasm. Functionally, involved in pre-mRNA splicing. May induce cell death, possibly by acting on the transcription and RNA processing of apoptosis-related factors. This chain is Cyclin-L2 (CCNL2), found in Homo sapiens (Human).